The following is a 305-amino-acid chain: UDP-3-O-acyl-N-acetylglucosamine deacetylase (305 aa).

3 residues coordinate Zn(2+): His78, His237, and Asp241. The active-site Proton donor is the His264.

The protein belongs to the LpxC family. It depends on Zn(2+) as a cofactor.

It catalyses the reaction a UDP-3-O-[(3R)-3-hydroxyacyl]-N-acetyl-alpha-D-glucosamine + H2O = a UDP-3-O-[(3R)-3-hydroxyacyl]-alpha-D-glucosamine + acetate. The protein operates within glycolipid biosynthesis; lipid IV(A) biosynthesis; lipid IV(A) from (3R)-3-hydroxytetradecanoyl-[acyl-carrier-protein] and UDP-N-acetyl-alpha-D-glucosamine: step 2/6. Catalyzes the hydrolysis of UDP-3-O-myristoyl-N-acetylglucosamine to form UDP-3-O-myristoylglucosamine and acetate, the committed step in lipid A biosynthesis. This chain is UDP-3-O-acyl-N-acetylglucosamine deacetylase, found in Cupriavidus necator (strain ATCC 17699 / DSM 428 / KCTC 22496 / NCIMB 10442 / H16 / Stanier 337) (Ralstonia eutropha).